Here is a 361-residue protein sequence, read N- to C-terminus: Phospho-N-acetylmuramoyl-pentapeptide-transferase (361 aa).

A run of 10 helical transmembrane segments spans residues 27 to 47 (GALFTAGLFVFWFGPWIISLL), 72 to 92 (TPTMGGLMILAGAVVAILLWA), 99 to 119 (VWVTLTVTLGFGAIGFYDDYL), 135 to 155 (LALEAVIAMAACVTIAVYSPA), 169 to 189 (ALLNLGWFYPLFGAFVIVGAG), 200 to 220 (GLAIVPVMIACGTFGFIAYLV), 240 to 260 (LAVVCGAVIGAGLGFLWFNAP), 264 to 284 (IFMGDTGSLALGGLLGSIAVA), 289 to 309 (IVLAIVGGLFVLEMMSVIIQV), and 338 to 358 (QVVIRFWIIAVILAMAGLATL).

The protein belongs to the glycosyltransferase 4 family. MraY subfamily. Mg(2+) is required as a cofactor.

The protein localises to the cell inner membrane. The enzyme catalyses UDP-N-acetyl-alpha-D-muramoyl-L-alanyl-gamma-D-glutamyl-meso-2,6-diaminopimeloyl-D-alanyl-D-alanine + di-trans,octa-cis-undecaprenyl phosphate = di-trans,octa-cis-undecaprenyl diphospho-N-acetyl-alpha-D-muramoyl-L-alanyl-D-glutamyl-meso-2,6-diaminopimeloyl-D-alanyl-D-alanine + UMP. Its pathway is cell wall biogenesis; peptidoglycan biosynthesis. Functionally, catalyzes the initial step of the lipid cycle reactions in the biosynthesis of the cell wall peptidoglycan: transfers peptidoglycan precursor phospho-MurNAc-pentapeptide from UDP-MurNAc-pentapeptide onto the lipid carrier undecaprenyl phosphate, yielding undecaprenyl-pyrophosphoryl-MurNAc-pentapeptide, known as lipid I. This chain is Phospho-N-acetylmuramoyl-pentapeptide-transferase, found in Methylobacterium radiotolerans (strain ATCC 27329 / DSM 1819 / JCM 2831 / NBRC 15690 / NCIMB 10815 / 0-1).